Here is a 239-residue protein sequence, read N- to C-terminus: Tungstate uptake system permease protein TupB (239 aa).

The ABC transmembrane type-1 domain occupies 37–233 (IKTTLLSSSI…LIAFCLNFIT (197 aa)). 5 helical membrane-spanning segments follow: residues 45–65 (SISI…LGFF), 76–96 (IVDT…YALI), 114–134 (LILG…SNLI), 168–188 (ISVV…AMIV), and 212–232 (FASG…LNFI).

Belongs to the binding-protein-dependent transport system permease family. The complex is composed of two ATP-binding proteins (TupC), two transmembrane proteins (TupB) and a solute-binding protein (TupA).

The protein localises to the cell inner membrane. In terms of biological role, part of an ABC transporter complex involved in ultra-high affinity tungstate uptake. Probably responsible for the translocation of the substrate across the membrane. This is Tungstate uptake system permease protein TupB from Campylobacter jejuni subsp. jejuni serotype O:2 (strain ATCC 700819 / NCTC 11168).